Consider the following 185-residue polypeptide: Elongation factor P (185 aa).

The protein belongs to the elongation factor P family.

The protein resides in the cytoplasm. It participates in protein biosynthesis; polypeptide chain elongation. Involved in peptide bond synthesis. Stimulates efficient translation and peptide-bond synthesis on native or reconstituted 70S ribosomes in vitro. Probably functions indirectly by altering the affinity of the ribosome for aminoacyl-tRNA, thus increasing their reactivity as acceptors for peptidyl transferase. In Streptococcus pyogenes serotype M5 (strain Manfredo), this protein is Elongation factor P.